The sequence spans 226 residues: Cytochrome c biogenesis ATP-binding export protein CcmA (226 aa).

Positions 19–226 (LRANDLAFSR…LGGAHALPPA (208 aa)) constitute an ABC transporter domain. Residue 51–58 (GPNGSGKS) participates in ATP binding.

Belongs to the ABC transporter superfamily. CcmA exporter (TC 3.A.1.107) family. As to quaternary structure, the complex is composed of two ATP-binding proteins (CcmA) and two transmembrane proteins (CcmB).

The protein resides in the cell inner membrane. The catalysed reaction is heme b(in) + ATP + H2O = heme b(out) + ADP + phosphate + H(+). Its function is as follows. Part of the ABC transporter complex CcmAB involved in the biogenesis of c-type cytochromes; once thought to export heme, this seems not to be the case, but its exact role is uncertain. Responsible for energy coupling to the transport system. This is Cytochrome c biogenesis ATP-binding export protein CcmA from Cupriavidus pinatubonensis (strain JMP 134 / LMG 1197) (Cupriavidus necator (strain JMP 134)).